We begin with the raw amino-acid sequence, 343 residues long: Cathepsin Q (343 aa).

Positions 1 to 20 (MTPAVFLVILCLGVVPGASA) are cleaved as a signal peptide. Residues 21 to 124 (LDLSLDVQWQ…FPNSWNWRDA (104 aa)) constitute a propeptide, activation peptide. 2 disulfide bridges follow: cysteine 146-cysteine 189 and cysteine 180-cysteine 222. Cysteine 149 is an active-site residue. Residue asparagine 228 is glycosylated (N-linked (GlcNAc...) asparagine). Residues cysteine 280 and cysteine 332 are joined by a disulfide bond. Residue histidine 286 is part of the active site. An N-linked (GlcNAc...) asparagine glycan is attached at asparagine 298. Residue asparagine 310 is part of the active site.

It belongs to the peptidase C1 family. In terms of tissue distribution, highly expressed in placenta.

The protein localises to the lysosome. This is Cathepsin Q (Ctsq) from Rattus norvegicus (Rat).